The following is a 153-amino-acid chain: Transcriptional repressor NrdR (153 aa).

A zinc finger lies at 3–34; that stretch reads CPSCSHNGTRVLDSRPVDEGRSIRRRRECESC. Residues 49 to 139 enclose the ATP-cone domain; it reads LIVVKKEGTR…VYRQFKDLNV (91 aa).

The protein belongs to the NrdR family. It depends on Zn(2+) as a cofactor.

Functionally, negatively regulates transcription of bacterial ribonucleotide reductase nrd genes and operons by binding to NrdR-boxes. This Bacillus anthracis (strain A0248) protein is Transcriptional repressor NrdR.